Here is a 406-residue protein sequence, read N- to C-terminus: COP9 signalosome complex subunit 4 (406 aa).

At Ala2 the chain carries N-acetylalanine. Residue Lys25 is modified to N6-acetyllysine. In terms of domain architecture, PCI spans 197–366 (YRRKFIEAAQ…GIVHFETREA (170 aa)).

The protein belongs to the CSN4 family. As to quaternary structure, component of the CSN complex, composed of COPS1/GPS1, COPS2, COPS3, COPS4, COPS5, COPS6, COPS7 (COPS7A or COPS7B), COPS8 and COPS9. In the complex, it probably interacts directly with COPS1, COPS2, COPS3, COPS5, COPS6, COPS7 (COPS7A or COPS7B) and COPS8. Interacts with TOR1A; the interaction is direct and associates TOR1A and SNAPIN with the CSN complex. Interacts with STON2; controls STON2 neddylation levels. Interacts with ERCC6.

Its subcellular location is the cytoplasm. It localises to the nucleus. The protein localises to the cytoplasmic vesicle. It is found in the secretory vesicle. The protein resides in the synaptic vesicle. In terms of biological role, component of the COP9 signalosome complex (CSN), a complex involved in various cellular and developmental processes. The CSN complex is an essential regulator of the ubiquitin (Ubl) conjugation pathway by mediating the deneddylation of the cullin subunits of SCF-type E3 ligase complexes, leading to decrease the Ubl ligase activity of SCF-type complexes such as SCF, CSA or DDB2. Also involved in the deneddylation of non-cullin subunits such as STON2. The complex is also involved in phosphorylation of p53/TP53, c-jun/JUN, IkappaBalpha/NFKBIA, ITPK1, IRF8/ICSBP and SNAPIN, possibly via its association with CK2 and PKD kinases. CSN-dependent phosphorylation of TP53 and JUN promotes and protects degradation by the Ubl system, respectively. The polypeptide is COP9 signalosome complex subunit 4 (Cops4) (Mus musculus (Mouse)).